A 206-amino-acid polypeptide reads, in one-letter code: Thiamine-phosphate synthase (206 aa).

4-amino-2-methyl-5-(diphosphooxymethyl)pyrimidine is bound by residues 38 to 42 and N70; that span reads QLRAK. The Mg(2+) site is built by D71 and D90. S107 contributes to the 4-amino-2-methyl-5-(diphosphooxymethyl)pyrimidine binding site. Position 133-135 (133-135) interacts with 2-[(2R,5Z)-2-carboxy-4-methylthiazol-5(2H)-ylidene]ethyl phosphate; that stretch reads TTT. K136 serves as a coordination point for 4-amino-2-methyl-5-(diphosphooxymethyl)pyrimidine. 2-[(2R,5Z)-2-carboxy-4-methylthiazol-5(2H)-ylidene]ethyl phosphate-binding positions include G164 and 184-185; that span reads VS.

This sequence belongs to the thiamine-phosphate synthase family. The cofactor is Mg(2+).

The catalysed reaction is 2-[(2R,5Z)-2-carboxy-4-methylthiazol-5(2H)-ylidene]ethyl phosphate + 4-amino-2-methyl-5-(diphosphooxymethyl)pyrimidine + 2 H(+) = thiamine phosphate + CO2 + diphosphate. The enzyme catalyses 2-(2-carboxy-4-methylthiazol-5-yl)ethyl phosphate + 4-amino-2-methyl-5-(diphosphooxymethyl)pyrimidine + 2 H(+) = thiamine phosphate + CO2 + diphosphate. It carries out the reaction 4-methyl-5-(2-phosphooxyethyl)-thiazole + 4-amino-2-methyl-5-(diphosphooxymethyl)pyrimidine + H(+) = thiamine phosphate + diphosphate. It functions in the pathway cofactor biosynthesis; thiamine diphosphate biosynthesis; thiamine phosphate from 4-amino-2-methyl-5-diphosphomethylpyrimidine and 4-methyl-5-(2-phosphoethyl)-thiazole: step 1/1. Its function is as follows. Condenses 4-methyl-5-(beta-hydroxyethyl)thiazole monophosphate (THZ-P) and 2-methyl-4-amino-5-hydroxymethyl pyrimidine pyrophosphate (HMP-PP) to form thiamine monophosphate (TMP). The sequence is that of Thiamine-phosphate synthase from Herpetosiphon aurantiacus (strain ATCC 23779 / DSM 785 / 114-95).